The chain runs to 577 residues: Efflux pump notK' (577 aa).

Asparagine 62 and asparagine 84 each carry an N-linked (GlcNAc...) asparagine glycan. The next 5 membrane-spanning stretches (helical) occupy residues 104–124 (AAIASVASFFLGLLANLPVAL), 151–171 (LAVTAVFVEGWIFLGLTMLGI), 189–209 (AGIGLYLTLIGLSYSAGLGLV), 241–261 (NPTMWIGIFCGGFFTVFLMMY), and 265–285 (GAVIAGILLVSIISWPRTTPV). Asparagine 320 is a glycosylation site (N-linked (GlcNAc...) asparagine). The next 5 helical transmembrane spans lie at 328-348 (FGLALITFLYVDILDATGTLY), 373-393 (VDAICISIGSLFGSPPVTAFV), 413-433 (GICFFIAVFFAPIFASIPPWA), 434-454 (TGSTLVIVGSMMMHATLEINW), and 476-496 (IADGLIAGIISYILINGGVWV). A compositionally biased stretch (low complexity) spans 555–566 (MPPNGSMSSGSP). The tract at residues 555 to 577 (MPPNGSMSSGSPEQVAEKAVGKY) is disordered. Residue asparagine 558 is glycosylated (N-linked (GlcNAc...) asparagine).

The protein belongs to the nucleobase:cation symporter-2 (NCS2) (TC 2.A.40) family. Azg-like subfamily.

Its subcellular location is the cell membrane. Efflux pump; part of the gene cluster that mediates the biosynthesis of notoamide, a fungal indole alkaloid that belongs to a family of natural products containing a characteristic bicyclo[2.2.2]diazaoctane core. The sequence is that of Efflux pump notK' from Aspergillus versicolor.